Here is a 97-residue protein sequence, read N- to C-terminus: Co-chaperonin GroES (97 aa).

The protein belongs to the GroES chaperonin family. As to quaternary structure, heptamer of 7 subunits arranged in a ring. Interacts with the chaperonin GroEL.

Its subcellular location is the cytoplasm. Its function is as follows. Together with the chaperonin GroEL, plays an essential role in assisting protein folding. The GroEL-GroES system forms a nano-cage that allows encapsulation of the non-native substrate proteins and provides a physical environment optimized to promote and accelerate protein folding. GroES binds to the apical surface of the GroEL ring, thereby capping the opening of the GroEL channel. This is Co-chaperonin GroES from Yersinia pseudotuberculosis serotype O:1b (strain IP 31758).